Consider the following 387-residue polypeptide: Phosphoglycerate kinase (387 aa).

Substrate is bound by residues 21 to 23 (DLN), Arg36, 59 to 62 (HLGR), Arg113, and Arg146. ATP is bound by residues Lys197, Glu314, and 340 to 343 (GGDT).

The protein belongs to the phosphoglycerate kinase family. In terms of assembly, monomer.

Its subcellular location is the cytoplasm. It catalyses the reaction (2R)-3-phosphoglycerate + ATP = (2R)-3-phospho-glyceroyl phosphate + ADP. It functions in the pathway carbohydrate degradation; glycolysis; pyruvate from D-glyceraldehyde 3-phosphate: step 2/5. The polypeptide is Phosphoglycerate kinase (Pseudomonas syringae pv. tomato (strain ATCC BAA-871 / DC3000)).